The following is a 46-amino-acid chain: Protein PsbN (46 aa).

The helical transmembrane segment at 10–30 (VAIAVLAALLGLTGFGVYTAF) threads the bilayer.

The protein belongs to the PsbN family.

It localises to the cellular thylakoid membrane. In terms of biological role, may play a role in photosystem I and II biogenesis. The sequence is that of Protein PsbN from Synechococcus sp. (strain WH7803).